The following is an 886-amino-acid chain: MADSSESFNIATSPRAGSRRDALTSSPGRDLPPFEDESEGMFGDGVVPEEEEDGEELIGDAMERDYRPISELDRYEVEGLDDEEDVEDLTASQREAAEQSMRMRDREMGRELGRMRRGLLYDSDEEEEDRPARKRRMAERAAEGAPEEDEEMIESIENLEDMKGHTVREWVSMAATRLEIYHRFKNFLRTHVDEHGHNVFKEKISDMCKENKESLPVNYEDLAAREHVLAYFLPEAPAEMLKIFDEAAKEVVLVMYPKYDRIAREIHVRISHLPLVEELRSLRQLHLNQLIRTSGVVTCCTGVLPQLSMVKYNCNKCNFILGPFFQSQNQEVRPGSCPECQSFGPFEINMEETVYQNYQRITIQESPGKVAAGRLPRSKDAILLADLVDSCKPGDEIELTGIYHNNYDGSLNTANGFPVFATVILANHITKKDDKVAVGELTDEDVKAIVALSKDERIGERIFASIAPSIYGHEDIKRGLALALFGGEAKNPGGKHKVRGDINVLLCGDPGTAKSQFLKYVEKVASRAVFTTGQGASAVGLTAYVQRHPVTKEWTLEAGALVLADRGVCLIDEFDKMNDQDRTSIHEAMEQQSISISKAGIVTSLQARCTVIAASNPIGGRYDPSLTFSENVDLTEPIVSRFDILCVVRDTVDPVQDEMLARFVVSSHIKHHPSSKDIANGDAAEFALPNTFGVEALPQEVLKKYIMYAKEKIRPKLNQMDQDKVAKMYSDLRKESMATGSIPITVRHIESMIRMAEAHARMHLRDYVVEDDVNMAIRVMLESFIDTQKFSVMRSMRKTFARYLAFRRDNNELLLFVLKQLIAEQVTYQRNRYGAQQDTIEVPEKDLVDKARQINIHNLSAFYDSDLFKMNKFTHDVKKKLIIQQF.

Residues 1–12 (MADSSESFNIAT) are compositionally biased toward polar residues. 3 disordered regions span residues 1–65 (MADS…MERD), 77–104 (VEGL…MRMR), and 120–151 (LYDS…EDEE). Acidic residues-rich tracts occupy residues 47-58 (VPEEEEDGEELI) and 78-88 (EGLDDEEDVED). Residues 95–104 (EAAEQSMRMR) are compositionally biased toward basic and acidic residues. The C4-type zinc-finger motif lies at 314–340 (CNKCNFILGPFFQSQNQEVRPGSCPEC). Residues 458–665 (IGERIFASIA…QDEMLARFVV (208 aa)) form the MCM domain. ADP contacts are provided by S515 and Q516. Residues 640–643 (SRFD) carry the Arginine finger motif.

The protein belongs to the MCM family. As to quaternary structure, component of the mcm2-7 complex (RLF-M). The complex forms a toroidal hexameric ring with the proposed subunit order mcm2-mcm6-mcm4-mcm7-mcm3-mcm5. Component of the replisome complex. Component of the CMG helicase complex, composed of the mcm2-7 complex, the GINS complex and cdc45. Post-translationally, may be in a phosphorylated state in the mitotic mcm complex. Phosphorylated in the interphase mcm complex. Phosphorylated by the cdc7-dbf4 and cdc7-dbf4b complexes.

The protein resides in the nucleus. It localises to the chromosome. The catalysed reaction is ATP + H2O = ADP + phosphate + H(+). Acts as a component of the MCM2-7 complex (MCM complex) which is the replicative helicase essential for 'once per cell cycle' DNA replication initiation and elongation in eukaryotic cells. Core component of CDC45-MCM-GINS (CMG) helicase, the molecular machine that unwinds template DNA during replication, and around which the replisome is built. The active ATPase sites in the MCM2-7 ring are formed through the interaction surfaces of two neighboring subunits such that a critical structure of a conserved arginine finger motif is provided in trans relative to the ATP-binding site of the Walker A box of the adjacent subunit. The six ATPase active sites, however, are likely to contribute differentially to the complex helicase activity. Required for the entry in S phase and for cell division. The sequence is that of DNA replication licensing factor mcm2 (mcm2) from Xenopus laevis (African clawed frog).